The chain runs to 284 residues: LQWARKRKIPSIQHDALLGKLSVSTQEGRLRDGTHDKLYSYGGRGFSVLRSDTMERIYDSGSIVEESHAMQYPKLFNSYAKSSVNITDTQDSRSDSKGPECESLAVAYSGTRVIVFVGCERPGTISIYSFNSNMTEGTLESIYSGAKTVLGTWGEAFDGGLLTDMDTDDIKYLPPFQSPTGQPLLVVTGSDTGTVSLFHVRGLDNPLPNPRVNSRVPVKPLQSSPLPESTPKSSTKTSSASPIKSRQGKKLRGKKQNKTGNTRFTYRNNKRNIKFKAGRKNNRN.

The segment at 202–284 (GLDNPLPNPR…FKAGRKNNRN (83 aa)) is disordered. A compositionally biased stretch (low complexity) spans 223-245 (SSPLPESTPKSSTKTSSASPIKS). A compositionally biased stretch (basic residues) spans 246 to 257 (RQGKKLRGKKQN). Residues 258-267 (KTGNTRFTYR) are compositionally biased toward polar residues. The segment covering 268 to 284 (NNKRNIKFKAGRKNNRN) has biased composition (basic residues).

Component of the organic matrix of calcified shell layers.

The chain is Gigasin-3a from Magallana gigas (Pacific oyster).